Reading from the N-terminus, the 169-residue chain is MTSAIRIIGIDPGLRRTGWGVIETLGNSLRFIASGTVMSDGDMDLASRLCQLHDGLADVVHLHQPDEAAVEQTFVNKDAVATLKLGQARGIAMLVPARAGLPVAEYAPNAVKKSVIGVGHGDKQQIHMMLKILMPKAEFKGNDAADALAIAICHAHNRGGERMRRALAG.

Residues Asp11, Glu71, and Asp143 contribute to the active site. Asp11, Glu71, and Asp143 together coordinate Mg(2+).

This sequence belongs to the RuvC family. As to quaternary structure, homodimer which binds Holliday junction (HJ) DNA. The HJ becomes 2-fold symmetrical on binding to RuvC with unstacked arms; it has a different conformation from HJ DNA in complex with RuvA. In the full resolvosome a probable DNA-RuvA(4)-RuvB(12)-RuvC(2) complex forms which resolves the HJ. Mg(2+) serves as cofactor.

The protein localises to the cytoplasm. It catalyses the reaction Endonucleolytic cleavage at a junction such as a reciprocal single-stranded crossover between two homologous DNA duplexes (Holliday junction).. Functionally, the RuvA-RuvB-RuvC complex processes Holliday junction (HJ) DNA during genetic recombination and DNA repair. Endonuclease that resolves HJ intermediates. Cleaves cruciform DNA by making single-stranded nicks across the HJ at symmetrical positions within the homologous arms, yielding a 5'-phosphate and a 3'-hydroxyl group; requires a central core of homology in the junction. The consensus cleavage sequence is 5'-(A/T)TT(C/G)-3'. Cleavage occurs on the 3'-side of the TT dinucleotide at the point of strand exchange. HJ branch migration catalyzed by RuvA-RuvB allows RuvC to scan DNA until it finds its consensus sequence, where it cleaves and resolves the cruciform DNA. The protein is Crossover junction endodeoxyribonuclease RuvC of Allorhizobium ampelinum (strain ATCC BAA-846 / DSM 112012 / S4) (Agrobacterium vitis (strain S4)).